The sequence spans 170 residues: Large ribosomal subunit protein uL16 (170 aa).

The protein belongs to the universal ribosomal protein uL16 family.

The protein is Large ribosomal subunit protein uL16 of Methanoculleus marisnigri (strain ATCC 35101 / DSM 1498 / JR1).